A 446-amino-acid polypeptide reads, in one-letter code: N-succinylarginine dihydrolase (446 aa).

Substrate is bound by residues 19 to 28 (AGLSFGNVAS), Asn110, and 137 to 138 (HR). Glu174 is a catalytic residue. Arg213 lines the substrate pocket. The active site involves His249. Substrate contacts are provided by Asp251 and Asn364. The Nucleophile role is filled by Cys370.

It belongs to the succinylarginine dihydrolase family. Homodimer.

The catalysed reaction is N(2)-succinyl-L-arginine + 2 H2O + 2 H(+) = N(2)-succinyl-L-ornithine + 2 NH4(+) + CO2. It functions in the pathway amino-acid degradation; L-arginine degradation via AST pathway; L-glutamate and succinate from L-arginine: step 2/5. In terms of biological role, catalyzes the hydrolysis of N(2)-succinylarginine into N(2)-succinylornithine, ammonia and CO(2). This chain is N-succinylarginine dihydrolase, found in Burkholderia orbicola (strain MC0-3).